A 538-amino-acid chain; its full sequence is Carboxypeptidase 2 (538 aa).

A signal peptide spans 1 to 21 (MVAYRFLTLISLGLGSHCASA). N-linked (GlcNAc...) asparagine glycosylation is present at asparagine 46. The segment at 53 to 76 (PAFTSPGTVPRGFSDGTSGPTRDE) is disordered. A Peptidase M14 domain is found at 71–351 (GPTRDETMEG…VMVKSILQTA (281 aa)). Residues histidine 136, glutamate 139, and histidine 224 each coordinate Zn(2+). Glutamate 322 functions as the Proton donor/acceptor in the catalytic mechanism. Residues asparagine 393 and asparagine 459 are each glycosylated (N-linked (GlcNAc...) asparagine).

Belongs to the peptidase M14 family. Zn(2+) is required as a cofactor.

Its subcellular location is the secreted. Its function is as follows. Extracellular metalloprotease that contributes to pathogenicity. The protein is Carboxypeptidase 2 (MCPB) of Trichophyton tonsurans (Scalp ringworm fungus).